The chain runs to 106 residues: Large ribosomal subunit protein uL24 (106 aa).

The protein belongs to the universal ribosomal protein uL24 family. In terms of assembly, part of the 50S ribosomal subunit.

In terms of biological role, one of two assembly initiator proteins, it binds directly to the 5'-end of the 23S rRNA, where it nucleates assembly of the 50S subunit. One of the proteins that surrounds the polypeptide exit tunnel on the outside of the subunit. In Azobacteroides pseudotrichonymphae genomovar. CFP2, this protein is Large ribosomal subunit protein uL24.